Consider the following 238-residue polypeptide: ATP-dependent dethiobiotin synthetase BioD (238 aa).

12-17 contributes to the ATP binding site; the sequence is GVGKTV. Threonine 16 provides a ligand contact to Mg(2+). Residue lysine 37 is part of the active site. Threonine 41 is a binding site for substrate. ATP-binding positions include aspartate 50, 109-112, 170-171, and 200-202; these read EGAG, GS, and PAG. Mg(2+) is bound by residues aspartate 50 and glutamate 109.

Belongs to the dethiobiotin synthetase family. In terms of assembly, homodimer. Requires Mg(2+) as cofactor.

It localises to the cytoplasm. It carries out the reaction (7R,8S)-7,8-diammoniononanoate + CO2 + ATP = (4R,5S)-dethiobiotin + ADP + phosphate + 3 H(+). It functions in the pathway cofactor biosynthesis; biotin biosynthesis; biotin from 7,8-diaminononanoate: step 1/2. Catalyzes a mechanistically unusual reaction, the ATP-dependent insertion of CO2 between the N7 and N8 nitrogen atoms of 7,8-diaminopelargonic acid (DAPA, also called 7,8-diammoniononanoate) to form a ureido ring. The polypeptide is ATP-dependent dethiobiotin synthetase BioD (Frankia casuarinae (strain DSM 45818 / CECT 9043 / HFP020203 / CcI3)).